Here is a 150-residue protein sequence, read N- to C-terminus: Photosystem II extrinsic protein V (150 aa).

An N-terminal signal peptide occupies residues 1–20 (MIRVIMLLVLVWMTPMISWA). Heme c contacts are provided by cysteine 50, cysteine 53, histidine 54, and histidine 105.

This sequence belongs to the cytochrome c family. PsbV subfamily. In terms of assembly, PSII is composed of 1 copy each of membrane proteins PsbA, PsbB, PsbC, PsbD, PsbE, PsbF, PsbH, PsbI, PsbJ, PsbK, PsbL, PsbM, PsbT, PsbY, PsbZ, Psb30/Ycf12, at least 3 peripheral proteins of the oxygen-evolving complex and a large number of cofactors. It forms dimeric complexes. The extrinsic subunits in red algae are PsbO (OEC33), PsbQ', cytochrome c-550 and PsbU. Requires heme c as cofactor.

It localises to the plastid. Its subcellular location is the chloroplast thylakoid membrane. Functionally, one of the extrinsic, lumenal subunits of photosystem II (PSII). PSII is a light-driven water plastoquinone oxidoreductase, using light energy to abstract electrons from H(2)O, generating a proton gradient subsequently used for ATP formation. The extrinsic proteins stabilize the structure of photosystem II oxygen-evolving complex (OEC), the ion environment of oxygen evolution and protect the OEC against heat-induced inactivation. The sequence is that of Photosystem II extrinsic protein V from Cyanidioschyzon merolae (strain NIES-3377 / 10D) (Unicellular red alga).